The following is a 452-amino-acid chain: cAMP-dependent protein kinase regulatory subunit (452 aa).

The interval 28-212 (QFCANYFNSK…ELSKTLGSNF (185 aa)) is dimerization and phosphorylation. A disordered region spans residues 74–163 (IMTTNKRQPS…APPVPKSKIP (90 aa)). The segment covering 75–84 (MTTNKRQPSF) has biased composition (polar residues). Positions 95–106 (SIDHHHDDDPKE) are enriched in basic and acidic residues. Ser-173 carries the post-translational modification Phosphoserine. Residues 213–330 (LFRQ…FLKD) and 333–451 (VLSS…QGSS) each bind a nucleoside 3',5'-cyclic phosphate. Positions 278, 287, 399, and 408 each coordinate 3',5'-cyclic AMP.

This sequence belongs to the cAMP-dependent kinase regulatory chain family. In terms of assembly, tetramer, composed of 2 regulatory (R) and 2 catalytic (C) subunits. In the presence of cAMP it dissociates into 2 active monomeric C subunits and an R dimer.

The polypeptide is cAMP-dependent protein kinase regulatory subunit (PKAR) (Debaryomyces hansenii (strain ATCC 36239 / CBS 767 / BCRC 21394 / JCM 1990 / NBRC 0083 / IGC 2968) (Yeast)).